Reading from the N-terminus, the 636-residue chain is Probable potassium transport system protein Kup (636 aa).

12 consecutive transmembrane segments (helical) span residues 22-42 (MGLL…SPLY), 64-84 (ILSL…VMFI), 114-134 (ALMV…SMIT), 150-170 (FEGI…ALFL), 182-202 (LFGP…VHGI), 220-240 (FFIV…LALT), 261-281 (WFAL…AILL), 293-313 (LLAP…ATVI), 351-371 (IYIG…VIGF), 383-403 (VAVT…MLLL), 408-428 (PVLA…FFAA), and 433-453 (IVQG…LMST).

It belongs to the HAK/KUP transporter (TC 2.A.72) family.

It is found in the cell inner membrane. The enzyme catalyses K(+)(in) + H(+)(in) = K(+)(out) + H(+)(out). In terms of biological role, transport of potassium into the cell. Likely operates as a K(+):H(+) symporter. The polypeptide is Probable potassium transport system protein Kup (Pseudomonas entomophila (strain L48)).